A 432-amino-acid polypeptide reads, in one-letter code: Adenosylhomocysteinase (432 aa).

Positions 1–24 (MSAYSPLSAQLDADTDVDVESTRT) are disordered. Asp-137 and Glu-162 together coordinate substrate. 163-165 (TTT) provides a ligand contact to NAD(+). Residues Lys-192 and Asp-196 each coordinate substrate. NAD(+) contacts are provided by residues Asn-197, 226–231 (GYGYCG), Glu-249, Asn-284, 305–307 (AGH), and Asn-352.

This sequence belongs to the adenosylhomocysteinase family. It depends on NAD(+) as a cofactor.

It localises to the cytoplasm. The catalysed reaction is S-adenosyl-L-homocysteine + H2O = L-homocysteine + adenosine. The protein operates within amino-acid biosynthesis; L-homocysteine biosynthesis; L-homocysteine from S-adenosyl-L-homocysteine: step 1/1. May play a key role in the regulation of the intracellular concentration of adenosylhomocysteine. In Haloquadratum walsbyi (strain DSM 16790 / HBSQ001), this protein is Adenosylhomocysteinase.